The chain runs to 224 residues: Response regulator protein GraR (224 aa).

Residues 2–115 form the Response regulatory domain; the sequence is QILLVEDDNT…VLIAKLQAIY (114 aa). Asp-51 is subject to 4-aspartylphosphate. A DNA-binding region (ompR/PhoB-type) is located at residues 126 to 224; sequence KRTLTWQDAV…KVGKGYMAHE (99 aa). A phosphothreonine mark is found at Thr-128, Thr-130, and Thr-149.

Interacts with GraX. Post-translationally, phosphorylated by GraS. Phosphorylated by Stk1; phosphorylation increases the DNA-binding activity of GraR.

The protein resides in the cytoplasm. In terms of biological role, member of the two-component regulatory system GraR/GraS involved in resistance against cationic antimicrobial peptides (CAMPs). Upon phosphorylation by GraS, functions as a transcription regulator by direct binding to promoter regions of target genes such as adhesins, exoproteins, transporters, toxins, and proteins involved in cell wall synthesis. Down-regulates the expression of many genes involved in RNA and amino acid synthesis or glycolysis. This is Response regulator protein GraR (graR) from Staphylococcus aureus (strain Mu3 / ATCC 700698).